The sequence spans 371 residues: O-phospho-L-seryl-tRNA:Cys-tRNA synthase 1 (371 aa).

Pyridoxal 5'-phosphate-binding positions include 78 to 79 (AR), Asn-183, and 206 to 208 (SGH). Position 209 is an N6-(pyridoxal phosphate)lysine (Lys-209).

It belongs to the SepCysS family. In terms of assembly, homodimer. Probably interacts with SepRS. The cofactor is pyridoxal 5'-phosphate.

The enzyme catalyses O-phospho-L-seryl-tRNA(Cys) + hydrogen sulfide + H(+) = L-cysteinyl-tRNA(Cys) + phosphate. Functionally, converts O-phospho-L-seryl-tRNA(Cys) (Sep-tRNA(Cys)) to L-cysteinyl-tRNA(Cys) (Cys-tRNA(Cys)). This is O-phospho-L-seryl-tRNA:Cys-tRNA synthase 1 from Archaeoglobus fulgidus (strain ATCC 49558 / DSM 4304 / JCM 9628 / NBRC 100126 / VC-16).